A 282-amino-acid polypeptide reads, in one-letter code: Probable endonuclease 4 (282 aa).

Zn(2+) is bound by residues His70, His110, Glu146, Asp180, His183, His217, Asp230, His232, and Glu262.

The protein belongs to the AP endonuclease 2 family. Requires Zn(2+) as cofactor.

The catalysed reaction is Endonucleolytic cleavage to 5'-phosphooligonucleotide end-products.. Its function is as follows. Endonuclease IV plays a role in DNA repair. It cleaves phosphodiester bonds at apurinic or apyrimidinic (AP) sites, generating a 3'-hydroxyl group and a 5'-terminal sugar phosphate. The protein is Probable endonuclease 4 of Wolinella succinogenes (strain ATCC 29543 / DSM 1740 / CCUG 13145 / JCM 31913 / LMG 7466 / NCTC 11488 / FDC 602W) (Vibrio succinogenes).